We begin with the raw amino-acid sequence, 305 residues long: Probable pyridoxal 5'-phosphate synthase subunit pdx1 (305 aa).

Aspartate 33 lines the D-ribose 5-phosphate pocket. The Schiff-base intermediate with D-ribose 5-phosphate role is filled by lysine 90. Glycine 162 serves as a coordination point for D-ribose 5-phosphate. Arginine 174 provides a ligand contact to D-glyceraldehyde 3-phosphate. D-ribose 5-phosphate is bound by residues glycine 223 and 244 to 245; that span reads GS.

Belongs to the PdxS/SNZ family. Homohexamer.

It catalyses the reaction aldehydo-D-ribose 5-phosphate + D-glyceraldehyde 3-phosphate + L-glutamine = pyridoxal 5'-phosphate + L-glutamate + phosphate + 3 H2O + H(+). The protein operates within cofactor biosynthesis; pyridoxal 5'-phosphate biosynthesis. Functionally, catalyzes the formation of pyridoxal 5'-phosphate from ribose 5-phosphate (RBP), glyceraldehyde 3-phosphate (G3P) and ammonia. The ammonia is provided by pdx2. Can also use ribulose 5-phosphate and dihydroxyacetone phosphate as substrates, resulting from enzyme-catalyzed isomerization of RBP and G3P, respectively. This is Probable pyridoxal 5'-phosphate synthase subunit pdx1 (pdx1) from Dictyostelium discoideum (Social amoeba).